The primary structure comprises 444 residues: Ribitol-5-phosphate xylosyltransferase 1 (444 aa).

Topologically, residues 1–9 (MRLTRTRLC) are cytoplasmic. A helical; Signal-anchor for type II membrane protein transmembrane segment spans residues 10–30 (SLLVALYCLFSIYAAYHVFFG). Over 31-444 (RRRRPLGTTS…ESSFFINNKV (414 aa)) the chain is Extracellular. Residues 38 to 79 (TTSRNSRKAAAAQAKERRGREQSALESEEWNPWEGDEKNEQR) are disordered. Residues 51 to 60 (AKERRGREQS) show a composition bias toward basic and acidic residues.

It belongs to the RXYLT1 family. As to quaternary structure, forms a complex composed of FKTN/fukutin, FKRP and RXYLT1/TMEM5.

The protein resides in the golgi apparatus membrane. The enzyme catalyses 3-O-[Rib-ol-P-Rib-ol-P-3-beta-D-GalNAc-(1-&gt;3)-beta-D-GlcNAc-(1-&gt;4)-(O-6-P-alpha-D-Man)]-Thr-[protein] + UDP-alpha-D-xylose = 3-O-[beta-D-Xyl-(1-&gt;4)-Rib-ol-P-Rib-ol-P-3-beta-D-GalNAc-(1-&gt;3)-beta-D-GlcNAc-(1-&gt;4)-(O-6-P-alpha-D-Man)]-Thr-[protein] + UDP + H(+). The protein operates within protein modification; protein glycosylation. Functionally, acts as a UDP-D-xylose:ribitol-5-phosphate beta1,4-xylosyltransferase, which catalyzes the transfer of UDP-D-xylose to ribitol 5-phosphate (Rbo5P) to form the Xylbeta1-4Rbo5P linkage on O-mannosyl glycan. Participates in the biosynthesis of the phosphorylated O-mannosyl trisaccharide (N-acetylgalactosamine-beta-3-N-acetylglucosamine-beta-4-(phosphate-6-)mannose), a carbohydrate structure present in alpha-dystroglycan (DAG1), which is required for binding laminin G-like domain-containing extracellular proteins with high affinity. The chain is Ribitol-5-phosphate xylosyltransferase 1 from Mus musculus (Mouse).